Consider the following 203-residue polypeptide: RNA annealing protein YRA2 (203 aa).

Met-1 is modified (N-acetylmethionine). 2 disordered regions span residues 1 to 60 (MDKA…REEP) and 137 to 203 (QPQR…YMKG). Residues 11–20 (NSHTDSSSNH) are compositionally biased toward polar residues. Basic and acidic residues predominate over residues 47-60 (SRSKDRLYREREEP). The 75-residue stretch at 64–138 (KRIRISKIPL…AKIEVEIYQP (75 aa)) folds into the RRM domain. 2 stretches are compositionally biased toward basic residues: residues 139-153 (QRKHSRMNAHNRRKQ) and 161-180 (GRPGSHYRQKPNRVSKKNKG).

It belongs to the YRA1 family. In terms of assembly, associates with mRNPs. Interacts with YRA1.

Its subcellular location is the nucleus. Its function is as follows. Involved in export of poly(A) mRNAs from the nucleus. Recruited to the coding sequences as well as poly-A sites of active genes. The sequence is that of RNA annealing protein YRA2 (YRA2) from Saccharomyces cerevisiae (strain JAY291) (Baker's yeast).